We begin with the raw amino-acid sequence, 371 residues long: UDP-N-acetylglucosamine--N-acetylmuramyl-(pentapeptide) pyrophosphoryl-undecaprenol N-acetylglucosamine transferase (371 aa).

UDP-N-acetyl-alpha-D-glucosamine contacts are provided by residues T15–G17, N126, R172, S199, I256, A275–E280, and Q301.

The protein belongs to the glycosyltransferase 28 family. MurG subfamily.

The protein localises to the cell inner membrane. It catalyses the reaction di-trans,octa-cis-undecaprenyl diphospho-N-acetyl-alpha-D-muramoyl-L-alanyl-D-glutamyl-meso-2,6-diaminopimeloyl-D-alanyl-D-alanine + UDP-N-acetyl-alpha-D-glucosamine = di-trans,octa-cis-undecaprenyl diphospho-[N-acetyl-alpha-D-glucosaminyl-(1-&gt;4)]-N-acetyl-alpha-D-muramoyl-L-alanyl-D-glutamyl-meso-2,6-diaminopimeloyl-D-alanyl-D-alanine + UDP + H(+). Its pathway is cell wall biogenesis; peptidoglycan biosynthesis. Its function is as follows. Cell wall formation. Catalyzes the transfer of a GlcNAc subunit on undecaprenyl-pyrophosphoryl-MurNAc-pentapeptide (lipid intermediate I) to form undecaprenyl-pyrophosphoryl-MurNAc-(pentapeptide)GlcNAc (lipid intermediate II). The sequence is that of UDP-N-acetylglucosamine--N-acetylmuramyl-(pentapeptide) pyrophosphoryl-undecaprenol N-acetylglucosamine transferase from Francisella tularensis subsp. mediasiatica (strain FSC147).